A 1859-amino-acid chain; its full sequence is DNA-directed RNA polymerase subunit beta'' (1859 aa).

Residues Cys286, Cys359, Cys366, and Cys369 each contribute to the Zn(2+) site.

This sequence belongs to the RNA polymerase beta' chain family. RpoC2 subfamily. As to quaternary structure, in plastids the minimal PEP RNA polymerase catalytic core is composed of four subunits: alpha, beta, beta', and beta''. When a (nuclear-encoded) sigma factor is associated with the core the holoenzyme is formed, which can initiate transcription. Requires Zn(2+) as cofactor.

The protein resides in the plastid. It localises to the chloroplast. The enzyme catalyses RNA(n) + a ribonucleoside 5'-triphosphate = RNA(n+1) + diphosphate. Its function is as follows. DNA-dependent RNA polymerase catalyzes the transcription of DNA into RNA using the four ribonucleoside triphosphates as substrates. The sequence is that of DNA-directed RNA polymerase subunit beta'' from Oltmannsiellopsis viridis (Marine flagellate).